Reading from the N-terminus, the 415-residue chain is NEDD8-specific protease 2 (415 aa).

The interval 1–42 (MRSNSIFTKEIDSEAVKKSSNLRPPSTGSSNSNGSDTASPKK) is disordered. Positions 26–38 (STGSSNSNGSDTA) are enriched in low complexity. Phosphoserine is present on Ser-35. Active-site residues include His-171, Asp-188, and Cys-229. The segment at 320 to 415 (AVTSDSAQPH…QHTQQSIEIH (96 aa)) is disordered. 3 stretches are compositionally biased toward polar residues: residues 335-368 (MPSSQPQSRSESLPLTHPNSEPNPKLDSQPNSSP), 379-390 (TASTSVLPTSIL), and 405-415 (IQHTQQSIEIH). At Ser-367 the chain carries Phosphoserine.

Belongs to the peptidase C48 family.

Its subcellular location is the cytoplasm. The protein resides in the nucleus. Its function is as follows. Protease that catalyzes two essential functions in the NEDD8 pathway: processing of full-length NEDD8 to its mature form and deconjugation of NEDD8 from targeted proteins such as the pcu1, pcu2 and pcu4 cullins and other proteins. Has a role in meiosis. In Schizosaccharomyces pombe (strain 972 / ATCC 24843) (Fission yeast), this protein is NEDD8-specific protease 2 (nep2).